Reading from the N-terminus, the 253-residue chain is Indole-3-glycerol phosphate synthase (253 aa).

It belongs to the TrpC family.

It carries out the reaction 1-(2-carboxyphenylamino)-1-deoxy-D-ribulose 5-phosphate + H(+) = (1S,2R)-1-C-(indol-3-yl)glycerol 3-phosphate + CO2 + H2O. The protein operates within amino-acid biosynthesis; L-tryptophan biosynthesis; L-tryptophan from chorismate: step 4/5. The sequence is that of Indole-3-glycerol phosphate synthase from Bacillus anthracis (strain A0248).